A 214-amino-acid polypeptide reads, in one-letter code: LexA repressor (214 aa).

Positions 26–46 (VREIGEAVGLSSSSTVHSYLK) form a DNA-binding region, H-T-H motif. Residues serine 138 and lysine 175 each act as for autocatalytic cleavage activity in the active site.

The protein belongs to the peptidase S24 family. In terms of assembly, homodimer.

It carries out the reaction Hydrolysis of Ala-|-Gly bond in repressor LexA.. Functionally, represses a number of genes involved in the response to DNA damage (SOS response), including recA and lexA. In the presence of single-stranded DNA, RecA interacts with LexA causing an autocatalytic cleavage which disrupts the DNA-binding part of LexA, leading to derepression of the SOS regulon and eventually DNA repair. This is LexA repressor from Desulforamulus reducens (strain ATCC BAA-1160 / DSM 100696 / MI-1) (Desulfotomaculum reducens).